The primary structure comprises 179 residues: Methylated-DNA--protein-cysteine methyltransferase, inducible (179 aa).

The active-site Nucleophile; methyl group acceptor is Cys141.

This sequence belongs to the MGMT family.

The enzyme catalyses a 6-O-methyl-2'-deoxyguanosine in DNA + L-cysteinyl-[protein] = S-methyl-L-cysteinyl-[protein] + a 2'-deoxyguanosine in DNA. It carries out the reaction a 4-O-methyl-thymidine in DNA + L-cysteinyl-[protein] = a thymidine in DNA + S-methyl-L-cysteinyl-[protein]. Its function is as follows. Involved in the cellular defense against the biological effects of O6-methylguanine (O6-MeG) and O4-methylthymine (O4-MeT) in DNA. Repairs the methylated nucleobase in DNA by stoichiometrically transferring the methyl group to a cysteine residue in the enzyme. This is a suicide reaction: the enzyme is irreversibly inactivated. In Bacillus subtilis (strain 168), this protein is Methylated-DNA--protein-cysteine methyltransferase, inducible (adaB).